A 111-amino-acid polypeptide reads, in one-letter code: UPF0339 protein in ptx operon 5'region (111 aa).

2 tandem repeats follow at residues 10 to 58 (DKAG…RYER) and 61 to 109 (SGAD…VVEV).

It belongs to the UPF0339 family. Duplicated subfamily.

The protein is UPF0339 protein in ptx operon 5'region of Stutzerimonas stutzeri (Pseudomonas stutzeri).